The primary structure comprises 129 residues: MRNVLIVMLGGFIGANLRYWLGEWMSSSSGFPTGTFVINAIGCFLLGWLLTYSEKNRLLSKEWSLLLGTGLIGSFTTFSTFSVETLLLIESAKYIVASLYVFGSIFLGIGLAYIGVRLALYCKKEEDIA.

Helical transmembrane passes span 4–24 (VLIV…LGEW), 30–50 (GFPT…GWLL), 63–83 (WSLL…TFSV), and 95–115 (IVAS…AYIG). Residues Gly73 and Thr76 each contribute to the Na(+) site.

The protein belongs to the fluoride channel Fluc/FEX (TC 1.A.43) family.

The protein resides in the cell membrane. The catalysed reaction is fluoride(in) = fluoride(out). Na(+) is not transported, but it plays an essential structural role and its presence is essential for fluoride channel function. Functionally, fluoride-specific ion channel. Important for reducing fluoride concentration in the cell, thus reducing its toxicity. The polypeptide is Fluoride-specific ion channel FluC (Oceanobacillus iheyensis (strain DSM 14371 / CIP 107618 / JCM 11309 / KCTC 3954 / HTE831)).